Here is a 175-residue protein sequence, read N- to C-terminus: uncharacterized protein (175 aa).

This is an uncharacterized protein from Bacillus subtilis (strain 168).